A 217-amino-acid polypeptide reads, in one-letter code: Peptidyl-tRNA hydrolase (217 aa).

A tRNA-binding site is contributed by tyrosine 14. Histidine 19 serves as the catalytic Proton acceptor. Positions 64, 66, and 113 each coordinate tRNA. Residues methionine 182–glycine 217 are disordered. Low complexity predominate over residues alanine 202–glycine 217.

It belongs to the PTH family. Monomer.

It is found in the cytoplasm. The enzyme catalyses an N-acyl-L-alpha-aminoacyl-tRNA + H2O = an N-acyl-L-amino acid + a tRNA + H(+). Functionally, hydrolyzes ribosome-free peptidyl-tRNAs (with 1 or more amino acids incorporated), which drop off the ribosome during protein synthesis, or as a result of ribosome stalling. Its function is as follows. Catalyzes the release of premature peptidyl moieties from peptidyl-tRNA molecules trapped in stalled 50S ribosomal subunits, and thus maintains levels of free tRNAs and 50S ribosomes. This chain is Peptidyl-tRNA hydrolase, found in Roseiflexus sp. (strain RS-1).